The primary structure comprises 172 residues: Small ribosomal subunit protein uS5 (172 aa).

The region spanning L11–F74 is the S5 DRBM domain.

This sequence belongs to the universal ribosomal protein uS5 family. Part of the 30S ribosomal subunit. Contacts proteins S4 and S8.

Functionally, with S4 and S12 plays an important role in translational accuracy. In terms of biological role, located at the back of the 30S subunit body where it stabilizes the conformation of the head with respect to the body. The sequence is that of Small ribosomal subunit protein uS5 from Neorickettsia sennetsu (strain ATCC VR-367 / Miyayama) (Ehrlichia sennetsu).